Reading from the N-terminus, the 338-residue chain is Cap-specific mRNA (nucleoside-2'-O-)-methyltransferase (338 aa).

Residue tyrosine 22 coordinates mRNA. S-adenosyl-L-methionine is bound by residues glutamine 39, tyrosine 66, glycine 68, glycine 72, aspartate 95, arginine 97, valine 116, and aspartate 138. Residues 169–249 form a binding to NPH-I region; sequence PAASSLKWRC…NKIIRNRIII (81 aa). The interval 169–333 is binding to Rap94; that stretch reads PAASSLKWRC…NTKKSVRGNK (165 aa). Lysine 175 acts as the For methyltransferase activity in catalysis. MRNA contacts are provided by residues 177–180, aspartate 182, 205–207, and glutamate 233; these read RCPF and SAE. Residues 305-338 are disordered; sequence HHEPTQRKVPSKNTMLKSRNTKKSVRGNKQGRRT. Residues 323–338 are compositionally biased toward basic residues; it reads RNTKKSVRGNKQGRRT.

It belongs to the class I-like SAM-binding methyltransferase superfamily. Poxvirus/kinetoplastid 2'-O-MTase family. As to quaternary structure, interacts with poly(A) polymerase catalytic subunit OPG063. Interacts with OPG109 and OPG123; these interactions might help linking transcription to capping and polyadenylation.

It localises to the virion. The catalysed reaction is a 5'-end (N(7)-methyl 5'-triphosphoguanosine)-ribonucleoside in mRNA + S-adenosyl-L-methionine = a 5'-end (N(7)-methyl 5'-triphosphoguanosine)-(2'-O-methyl-ribonucleoside) in mRNA + S-adenosyl-L-homocysteine + H(+). Its function is as follows. Displays methyltransferase, positive regulation of the poly(A) polymerase and transcription elongation activities. Involved in the modification of both mRNA ends and in intermediate and late gene positive transcription elongation. At the mRNAs 5' end, methylates the ribose 2' OH group of the first transcribed nucleotide, thereby producing a 2'-O-methylpurine cap. At the 3' end, functions as a processivity factor which stimulates the activity of the viral poly(A) polymerase OPG063 that creates mRNA's poly(A) tail. In the presence of OPG102, OPG063 does not dissociate from the RNA allowing tail elongation to around 250 adenylates. The sequence is that of Cap-specific mRNA (nucleoside-2'-O-)-methyltransferase (OPG102) from Oryctolagus cuniculus (Rabbit).